Consider the following 935-residue polypeptide: Isoleucine--tRNA ligase (935 aa).

Positions 58–68 (PYANGSIHVGH) match the 'HIGH' region motif. E558 lines the L-isoleucyl-5'-AMP pocket. The short motif at 599–603 (KMSKS) is the 'KMSKS' region element. K602 serves as a coordination point for ATP. C897, C900, C917, and C920 together coordinate Zn(2+).

Belongs to the class-I aminoacyl-tRNA synthetase family. IleS type 1 subfamily. As to quaternary structure, monomer. Zn(2+) is required as a cofactor.

The protein resides in the cytoplasm. The enzyme catalyses tRNA(Ile) + L-isoleucine + ATP = L-isoleucyl-tRNA(Ile) + AMP + diphosphate. Its function is as follows. Catalyzes the attachment of isoleucine to tRNA(Ile). As IleRS can inadvertently accommodate and process structurally similar amino acids such as valine, to avoid such errors it has two additional distinct tRNA(Ile)-dependent editing activities. One activity is designated as 'pretransfer' editing and involves the hydrolysis of activated Val-AMP. The other activity is designated 'posttransfer' editing and involves deacylation of mischarged Val-tRNA(Ile). In Francisella tularensis subsp. tularensis (strain SCHU S4 / Schu 4), this protein is Isoleucine--tRNA ligase.